The chain runs to 2611 residues: Highly reducing polyketide synthase ATEG_07659 (2611 aa).

The region spanning 10-409 (SEPIAIIGLS…GTNSHVIVEG (400 aa)) is the Ketosynthase family 3 (KS3) domain. Active-site for beta-ketoacyl synthase activity residues include C157, H292, and H330. A malonyl-CoA:ACP transacylase (MAT) domain region spans residues 537 to 844 (MVFTGQGAQW…VRFVEAFTDM (308 aa)). The tract at residues 969–1109 (HDLLGVLVPG…GLITVQMAAD (141 aa)) is N-terminal hotdog fold. Residues 969–1292 (HDLLGVLVPG…CQSLGRSAPG (324 aa)) enclose the PKS/mFAS DH domain. A dehydratase (DH) domain region spans residues 970-1289 (DLLGVLVPGT…GLVCQSLGRS (320 aa)). H1001 acts as the Proton acceptor; for dehydratase activity in catalysis. Residues 1128–1292 (GYTRRIDPQD…CQSLGRSAPG (165 aa)) are C-terminal hotdog fold. Residue D1199 is the Proton donor; for dehydratase activity of the active site. The interval 1469 to 1602 (FGQLKSLLAA…GATLLLMETT (134 aa)) is methyltransferase (CMet) domain. The tract at residues 1898–2213 (GLLDTLAFGD…TGKHLGKLVL (316 aa)) is enoyl reductase (ER) domain. Residues 2236–2416 (ASYLLVGGVG…AVSLDMGVIK (181 aa)) form a ketoreductase (KR) domain region. The segment covering 2499-2509 (SRAQAQQAGGD) has biased composition (low complexity). The segment at 2499–2520 (SRAQAQQAGGDSDSEPLSAKLR) is disordered. One can recognise a Carrier domain in the interval 2527–2604 (AAARCVGDAI…ALALDVVAKS (78 aa)). At S2564 the chain carries O-(pantetheine 4'-phosphoryl)serine.

Its pathway is secondary metabolite biosynthesis. Highly reducing polyketide synthase; part of the cluster B that mediates the biosynthesis of azasperpyranones, members of the azaphilone family that exhibit anti-cancer activities. Azasperpyranones are synthesized by 2 clusters, A and B. Cluster A is responsible for the production of the polyhydric phenol moiety while the azaphilonoid scaffold is produced by the cluster B. The non-reducing polyketide synthase ATEG_03629 produces 5-methyl orsellinic acid, which is then reduced to 5-methyl orsellinic aldehyde by the NRPS-like protein ATEG_03630. 5-methyl orsellinic aldehyde is then first hydroxylated by the FAD-dependent monooxygenase ATEG_03635 and subsequently hydroxylated by the cytochrome P450 monooxygenase ATEG_03631 to produce the unstable polyhydric phenol precursor of azasperpyranones. On the other hand, the polyketide synthase ATEG_07659 is responsible for producing the 3,5-dimethyloctadienone moiety from acetyl-CoA, three malonyl-CoA, and two S-adenosyl methionines (SAM). The 3,5-dimethyloctadienone moiety is then loaded onto the SAT domain of ATEG_07661 and extended with four malonyl-CoA and one SAM, which leads to the formation of 2,4-dihydroxy-6-(5,7-dimethyl-2-oxo-trans-3-trans-5-nonadienyl)-3-methylbenzaldehyde (compound 8) after reductive release and aldol condensation. The FAD-dependent monooxygenase ATEG_07662 is the next enzyme in the biosynthesis sequence and hydroxylates the side chain at the benzylic position of compound 8. In Aspergillus nidulans, afoF, the ortholog of the FAD-dependent oxygenase ATEG_07660, is the key enzyme for the biosynthesis of asperfuranone by catalyzing the hydroxylation at C-8 of to prevent the formation of a six-membered ring hemiacetal intermediate and thus facilitating the formation of a five-membered ring to produce asperfuranone. In Aspergillus terreus, ATEG_07660 is probably not functional, which leads to the formation of the six-membered ring hemiacetal intermediate presperpyranone instead of asperfuranone. Finally, ATEG_03636 is involved in the condensation of the polyhydric phenol moiety produced by cluster A and the perasperpyranone precursor produced by cluster B, to yield azasperpyranone A. Further modifications of azasperpyranone A result in the production of derivatives, including azasperpyranone B to F. This chain is Highly reducing polyketide synthase ATEG_07659, found in Aspergillus terreus (strain NIH 2624 / FGSC A1156).